A 262-amino-acid chain; its full sequence is Urease accessory protein UreD (262 aa).

It belongs to the UreD family. UreD, UreF and UreG form a complex that acts as a GTP-hydrolysis-dependent molecular chaperone, activating the urease apoprotein by helping to assemble the nickel containing metallocenter of UreC. The UreE protein probably delivers the nickel.

It localises to the cytoplasm. Required for maturation of urease via the functional incorporation of the urease nickel metallocenter. This chain is Urease accessory protein UreD, found in Acetivibrio thermocellus (strain ATCC 27405 / DSM 1237 / JCM 9322 / NBRC 103400 / NCIMB 10682 / NRRL B-4536 / VPI 7372) (Clostridium thermocellum).